The following is a 388-amino-acid chain: Succinate--CoA ligase [ADP-forming] subunit beta (388 aa).

Residues K9–H244 form the ATP-grasp domain. ATP contacts are provided by residues K46, G53 to G55, E99, T102, and E107. Residues N199 and D213 each contribute to the Mg(2+) site. Residues N264 and G321–V323 contribute to the substrate site.

It belongs to the succinate/malate CoA ligase beta subunit family. In terms of assembly, heterotetramer of two alpha and two beta subunits. Mg(2+) is required as a cofactor.

It catalyses the reaction succinate + ATP + CoA = succinyl-CoA + ADP + phosphate. It carries out the reaction GTP + succinate + CoA = succinyl-CoA + GDP + phosphate. The protein operates within carbohydrate metabolism; tricarboxylic acid cycle; succinate from succinyl-CoA (ligase route): step 1/1. Its function is as follows. Succinyl-CoA synthetase functions in the citric acid cycle (TCA), coupling the hydrolysis of succinyl-CoA to the synthesis of either ATP or GTP and thus represents the only step of substrate-level phosphorylation in the TCA. The beta subunit provides nucleotide specificity of the enzyme and binds the substrate succinate, while the binding sites for coenzyme A and phosphate are found in the alpha subunit. In Sodalis glossinidius (strain morsitans), this protein is Succinate--CoA ligase [ADP-forming] subunit beta.